The primary structure comprises 41 residues: Antifungal peptide 2 (41 aa).

Position 1 is a pyrrolidone carboxylic acid (Gln-1). 5 disulfides stabilise this stretch: Cys-3/Cys-17, Cys-7/Cys-37, Cys-11/Cys-23, Cys-16/Cys-30, and Cys-35/Cys-39. In terms of domain architecture, Chitin-binding type-1 spans 4 to 41 (ASRCPRPCNAGLCCSIYGYCGSGAAYCGAGNCRCQCRG).

As to quaternary structure, monomer.

Has antifungal activity against P.infestans, A.lycopersici, V.dahliae, G.zeae, A.nicotianae, F.moniliforme, F.oxysporum and C.gossypii. The sequence is that of Antifungal peptide 2 from Eucommia ulmoides (Hardy rubber tree).